The sequence spans 462 residues: tRNA wybutosine-synthesizing protein 2 (462 aa).

S-adenosyl-L-methionine-binding positions include Ser-257, Lys-264, and 305–306 (EL).

It belongs to the class I-like SAM-binding methyltransferase superfamily. TRM5/TYW2 family.

The protein localises to the cytoplasm. The catalysed reaction is 4-demethylwyosine(37) in tRNA(Phe) + S-adenosyl-L-methionine = 4-demethyl-7-[(3S)-3-amino-3-carboxypropyl]wyosine(37) in tRNA(Phe) + S-methyl-5'-thioadenosine + H(+). Its pathway is tRNA modification; wybutosine-tRNA(Phe) biosynthesis. S-adenosyl-L-methionine-dependent transferase that acts as a component of the wybutosine biosynthesis pathway. Wybutosine is a hyper modified guanosine with a tricyclic base found at the 3'-position adjacent to the anticodon of eukaryotic phenylalanine tRNA. Catalyzes the transfer of the alpha-amino-alpha-carboxypropyl (acp) group from S-adenosyl-L-methionine to the C-7 position of 4-demethylwyosine (imG-14) to produce wybutosine-86. The chain is tRNA wybutosine-synthesizing protein 2 (TRM12) from Saccharomyces cerevisiae (strain ATCC 204508 / S288c) (Baker's yeast).